The primary structure comprises 499 residues: Lysine--tRNA ligase (499 aa).

Positions 408 and 415 each coordinate Mg(2+).

This sequence belongs to the class-II aminoacyl-tRNA synthetase family. In terms of assembly, homodimer. Mg(2+) serves as cofactor.

The protein resides in the cytoplasm. It carries out the reaction tRNA(Lys) + L-lysine + ATP = L-lysyl-tRNA(Lys) + AMP + diphosphate. This is Lysine--tRNA ligase from Bacillus cereus (strain G9842).